The chain runs to 425 residues: Histone-binding protein RBBP7 (425 aa).

WD repeat units follow at residues Gln47 to His122, Arg128 to Arg173, Gly181 to Asp217, Val228 to Asp269, Val275 to Phe312, Glu318 to His369, and Ile376 to Met403.

Belongs to the WD repeat RBAP46/RBAP48/MSI1 family. In terms of assembly, binds directly to helix 1 of the histone fold of histone H4, a region that is not accessible when H4 is in chromatin.

It is found in the nucleus. In terms of biological role, core histone-binding subunit that may target chromatin remodeling factors, histone acetyltransferases and histone deacetylases to their histone substrates in a manner that is regulated by nucleosomal DNA. Component of several complexes which regulate chromatin metabolism. This is Histone-binding protein RBBP7 (rbbp7) from Xenopus tropicalis (Western clawed frog).